Consider the following 548-residue polypeptide: ATP synthase subunit alpha (548 aa).

172-179 is an ATP binding site; that stretch reads GDRKTGKT. A disordered region spans residues 526–548; sequence AEAMDEADVEKESVKVRKPAPKK.

The protein belongs to the ATPase alpha/beta chains family. As to quaternary structure, F-type ATPases have 2 components, CF(1) - the catalytic core - and CF(0) - the membrane proton channel. CF(1) has five subunits: alpha(3), beta(3), gamma(1), delta(1), epsilon(1). CF(0) has three main subunits: a(1), b(2) and c(9-12). The alpha and beta chains form an alternating ring which encloses part of the gamma chain. CF(1) is attached to CF(0) by a central stalk formed by the gamma and epsilon chains, while a peripheral stalk is formed by the delta and b chains.

It localises to the cell membrane. The enzyme catalyses ATP + H2O + 4 H(+)(in) = ADP + phosphate + 5 H(+)(out). Functionally, produces ATP from ADP in the presence of a proton gradient across the membrane. The alpha chain is a regulatory subunit. The sequence is that of ATP synthase subunit alpha from Mycolicibacterium vanbaalenii (strain DSM 7251 / JCM 13017 / BCRC 16820 / KCTC 9966 / NRRL B-24157 / PYR-1) (Mycobacterium vanbaalenii).